Consider the following 179-residue polypeptide: Large ribosomal subunit protein uL5c (179 aa).

It belongs to the universal ribosomal protein uL5 family. Part of the 50S ribosomal subunit; contacts the 5S rRNA.

Its subcellular location is the plastid. It is found in the chloroplast. In terms of biological role, binds 5S rRNA, forms part of the central protuberance of the 50S subunit. In Gracilaria tenuistipitata var. liui (Red alga), this protein is Large ribosomal subunit protein uL5c (rpl5).